Here is a 676-residue protein sequence, read N- to C-terminus: Methionine--tRNA ligase (676 aa).

The short motif at 15 to 25 (PYANGPIHLGH) is the 'HIGH' region element. Zn(2+) is bound by residues C146, C149, C159, and C162. The 'KMSKS' region motif lies at 332-336 (KMSKS). K335 is a binding site for ATP. Residues 575-676 (DFAKIDLRIA…EGAQPGMRVK (102 aa)) form the tRNA-binding domain.

It belongs to the class-I aminoacyl-tRNA synthetase family. MetG type 1 subfamily. As to quaternary structure, homodimer. The cofactor is Zn(2+).

The protein resides in the cytoplasm. It carries out the reaction tRNA(Met) + L-methionine + ATP = L-methionyl-tRNA(Met) + AMP + diphosphate. Is required not only for elongation of protein synthesis but also for the initiation of all mRNA translation through initiator tRNA(fMet) aminoacylation. The chain is Methionine--tRNA ligase from Shewanella sp. (strain MR-7).